A 783-amino-acid polypeptide reads, in one-letter code: Protein phosphatase 2C 29 (783 aa).

The interval 151 to 194 is disordered; sequence SFSALPLQPGPDRSGLFMSGPIERGATSGPLDPPAGEISRSNSA. Serine 199 bears the Phosphoserine mark. One can recognise a PPM-type phosphatase domain in the interval 260-770; the sequence is SSGENDLQWA…DDCTVLVIAL (511 aa). The Mn(2+) site is built by aspartate 295 and glycine 296. The disordered stretch occupies residues 555 to 595; sequence ETGESVETAERVEERRNDLDRDDGNKEPLVVDSSDSTVNNE. Over residues 562-580 the composition is skewed to basic and acidic residues; sequence TAERVEERRNDLDRDDGNK. Aspartate 701 and aspartate 761 together coordinate Mn(2+).

Belongs to the PP2C family. Mg(2+) is required as a cofactor. The cofactor is Mn(2+). Expressed in roots, leaves, stems, inflorescences, flowers and developing vascular tissue.

It is found in the nucleus. The catalysed reaction is O-phospho-L-seryl-[protein] + H2O = L-seryl-[protein] + phosphate. It catalyses the reaction O-phospho-L-threonyl-[protein] + H2O = L-threonyl-[protein] + phosphate. Its function is as follows. Involved in the regulation of pedicel length and of CLAVATA pathways controlling stem cell identity at shoot and flower meristems. This is Protein phosphatase 2C 29 (PLL1) from Arabidopsis thaliana (Mouse-ear cress).